An 833-amino-acid polypeptide reads, in one-letter code: pre-rRNA 2'-O-ribose RNA methyltransferase (833 aa).

S-adenosyl-L-methionine is bound by residues Gly-57, Trp-59, Asp-77, Asp-93, and Asp-118. Lys-158 acts as the Proton acceptor in catalysis. 5 disordered regions span residues Lys-323 to Asn-349, Lys-363 to Leu-453, Leu-475 to Asp-640, Leu-730 to Asp-767, and Ile-779 to Lys-833. Residues Glu-336 to Thr-386 adopt a coiled-coil conformation. Residues Lys-363–Arg-381 show a composition bias toward basic residues. Basic and acidic residues predominate over residues Lys-382 to Glu-396. The span at Ser-423 to Asn-441 shows a compositional bias: acidic residues. Residues Gln-455–Ile-485 adopt a coiled-coil conformation. Positions Leu-475–Gly-486 are enriched in basic and acidic residues. 2 stretches are compositionally biased toward acidic residues: residues Tyr-490–Glu-503 and Ser-542–Asp-556. Basic and acidic residues predominate over residues Glu-557–Lys-566. Acidic residues-rich tracts occupy residues Asp-605–Asp-614 and Pro-626–Asp-640. Basic and acidic residues-rich tracts occupy residues Lys-732–Ala-741, Ser-751–Asp-767, and Lys-794–Ala-806.

The protein belongs to the class I-like SAM-binding methyltransferase superfamily. RNA methyltransferase RlmE family. SPB1 subfamily.

It localises to the nucleus. Its subcellular location is the nucleolus. The catalysed reaction is a ribonucleotide in rRNA + S-adenosyl-L-methionine = a 2'-O-methylribonucleotide in rRNA + S-adenosyl-L-homocysteine + H(+). Functionally, RNA 2'-O-methyltransferase involved in the maturation of rRNA and in the biogenesis of ribosomal subunits. This chain is pre-rRNA 2'-O-ribose RNA methyltransferase (fsjC), found in Dictyostelium discoideum (Social amoeba).